A 297-amino-acid polypeptide reads, in one-letter code: uncharacterized protein (297 aa).

The interval 267-297 (NTQHAGKPGAQHRTRRSPPAFRRADRLRQSA) is disordered. A compositionally biased stretch (basic and acidic residues) spans 288–297 (RRADRLRQSA).

This is an uncharacterized protein from Treponema pallidum (strain Nichols).